The chain runs to 875 residues: Lysine-specific demethylase 7A (875 aa).

The PHD-type zinc finger occupies 5 to 56; it reads PLYCVCRQPYDVNRFMIECDICKDWFHGSCVQVVEHHAADIDVYHCPNCEPI. The JmjC domain maps to 197–353; sequence FSDTRMSNLV…MQLRCYEMER (157 aa). Thr-246 contributes to the substrate binding site. Fe cation-binding residues include His-249 and Asp-251. A substrate-binding site is contributed by Lys-266. His-321 is a Fe cation binding site. Disordered stretches follow at residues 442–506, 629–710, and 742–820; these read EDDS…SRKL, SQGE…NTDC, and QGNG…ATAK. Polar residues predominate over residues 448–462; the sequence is AVKTQGSAECSLSRS. Over residues 478–505 the composition is skewed to basic residues; that stretch reads QDHHHHRRRHHHHHHHHHHHHHHHHSRK. The span at 650-663 shows a compositional bias: basic and acidic residues; it reads SDSKAGDSAEKCSL. The segment covering 688–697 has biased composition (basic residues); it reads SHRHSHHKQA. Positions 742–762 are enriched in low complexity; sequence QGNGSSTSSSSDMWDSSEPCS.

Belongs to the JHDM1 histone demethylase family. JHDM1D subfamily. The cofactor is Fe(2+). In terms of tissue distribution, predominantly expressed in brain.

Its subcellular location is the nucleus. Its function is as follows. Histone demethylase required for brain development. Specifically demethylates dimethylated 'Lys-9' and 'Lys-27' (H3K9me2 and H3K27me2, respectively) of histone H3 and monomethylated histone H4 'Lys-20' residue (H4K20Me1), thereby playing a central role in histone code. The sequence is that of Lysine-specific demethylase 7A (kdm7a) from Danio rerio (Zebrafish).